We begin with the raw amino-acid sequence, 420 residues long: UDP-N-acetylmuramoylalanine--D-glutamate ligase (420 aa).

109-115 (GSVGKST) serves as a coordination point for ATP.

Belongs to the MurCDEF family.

The protein localises to the cytoplasm. It carries out the reaction UDP-N-acetyl-alpha-D-muramoyl-L-alanine + D-glutamate + ATP = UDP-N-acetyl-alpha-D-muramoyl-L-alanyl-D-glutamate + ADP + phosphate + H(+). Its pathway is cell wall biogenesis; peptidoglycan biosynthesis. Its function is as follows. Cell wall formation. Catalyzes the addition of glutamate to the nucleotide precursor UDP-N-acetylmuramoyl-L-alanine (UMA). The sequence is that of UDP-N-acetylmuramoylalanine--D-glutamate ligase from Fervidobacterium nodosum (strain ATCC 35602 / DSM 5306 / Rt17-B1).